Reading from the N-terminus, the 143-residue chain is Large ribosomal subunit protein uL11 (143 aa).

It belongs to the universal ribosomal protein uL11 family. As to quaternary structure, part of the ribosomal stalk of the 50S ribosomal subunit. Interacts with L10 and the large rRNA to form the base of the stalk. L10 forms an elongated spine to which L12 dimers bind in a sequential fashion forming a multimeric L10(L12)X complex. In terms of processing, one or more lysine residues are methylated.

In terms of biological role, forms part of the ribosomal stalk which helps the ribosome interact with GTP-bound translation factors. The sequence is that of Large ribosomal subunit protein uL11 from Azotobacter vinelandii (strain DJ / ATCC BAA-1303).